We begin with the raw amino-acid sequence, 304 residues long: MFNKRNLKWLSVLATIIMAFVQLGGALVTKTGSEDGCGSSWPLCHGALLPQNLPIDTIIELSHRAVSGLSLIVVLWLAITAWKHIGYIREVKPLAIISIAFLLVQALIGAAAVIWQQNSYVLALHFGISLISFSSVFVLMLIIFEVDKKYEADELYIRKPLRRLTWIMTGIVYLTIYTGALVRHAKASLAYGGWPLPFHDIIPHTEQDWVQFAHRGMAFITFFWIMITFIHAVKNYSENRTIRYGYTTAFILIILQVITGALSVMTNVNLFIALLHALFITILFGMIAYFIMLMLRTIRSEKIK.

The Cytoplasmic segment spans residues 1-8 (MFNKRNLK). The chain crosses the membrane as a helical span at residues 9–29 (WLSVLATIIMAFVQLGGALVT). Residues 30–67 (KTGSEDGCGSSWPLCHGALLPQNLPIDTIIELSHRAVS) are Extracellular-facing. Cysteines 37 and 44 form a disulfide. Residue Glu60 is part of the active site. Position 63 (His63) interacts with heme o. A helical membrane pass occupies residues 68 to 88 (GLSLIVVLWLAITAWKHIGYI). The Cytoplasmic segment spans residues 89 to 93 (REVKP). Residues 94–114 (LAIISIAFLLVQALIGAAAVI) traverse the membrane as a helical segment. At 115–123 (WQQNSYVLA) the chain is on the extracellular side. The helical transmembrane segment at 124–144 (LHFGISLISFSSVFVLMLIIF) threads the bilayer. His125 contacts heme o. Topologically, residues 145–163 (EVDKKYEADELYIRKPLRR) are cytoplasmic. A helical membrane pass occupies residues 164-184 (LTWIMTGIVYLTIYTGALVRH). Topologically, residues 185–215 (AKASLAYGGWPLPFHDIIPHTEQDWVQFAHR) are extracellular. His214 is a heme b binding site. Residues 216 to 236 (GMAFITFFWIMITFIHAVKNY) traverse the membrane as a helical segment. Residues 237–244 (SENRTIRY) are Cytoplasmic-facing. Residues 245 to 265 (GYTTAFILIILQVITGALSVM) traverse the membrane as a helical segment. Topologically, residues 266–270 (TNVNL) are extracellular. A helical transmembrane segment spans residues 271 to 291 (FIALLHALFITILFGMIAYFI). His276 serves as a coordination point for heme b. The Cytoplasmic segment spans residues 292 to 304 (MLMLRTIRSEKIK).

It belongs to the COX15/CtaA family. Type 1 subfamily. As to quaternary structure, interacts with CtaB. It depends on heme b as a cofactor.

Its subcellular location is the cell membrane. It carries out the reaction Fe(II)-heme o + 2 A + H2O = Fe(II)-heme a + 2 AH2. It participates in porphyrin-containing compound metabolism; heme A biosynthesis; heme A from heme O: step 1/1. Catalyzes the conversion of heme O to heme A by two successive hydroxylations of the methyl group at C8. The first hydroxylation forms heme I, the second hydroxylation results in an unstable dihydroxymethyl group, which spontaneously dehydrates, resulting in the formyl group of heme A. The sequence is that of Heme A synthase from Staphylococcus haemolyticus (strain JCSC1435).